The following is a 143-amino-acid chain: Putative pre-16S rRNA nuclease (143 aa).

The protein belongs to the YqgF nuclease family.

Its subcellular location is the cytoplasm. In terms of biological role, could be a nuclease involved in processing of the 5'-end of pre-16S rRNA. The polypeptide is Putative pre-16S rRNA nuclease (ybeB) (Lactococcus lactis subsp. lactis (strain IL1403) (Streptococcus lactis)).